We begin with the raw amino-acid sequence, 328 residues long: Flap endonuclease 1 (328 aa).

An N-domain region spans residues 1-98; the sequence is MGVKLRDVVS…ETVSRRADIR (98 aa). 7 residues coordinate Mg(2+): Asp27, Asp80, Glu152, Glu154, Asp173, Asp175, and Asp226. The segment at 116–247 is I-domain; it reads RAKKYAVRSS…RGLKLIREKG (132 aa). The tract at residues 320–328 is interaction with PCNA; the sequence is TQKSLEDWF.

This sequence belongs to the XPG/RAD2 endonuclease family. FEN1 subfamily. As to quaternary structure, interacts with PCNA. PCNA stimulates the nuclease activity without altering cleavage specificity. The cofactor is Mg(2+).

Functionally, structure-specific nuclease with 5'-flap endonuclease and 5'-3' exonuclease activities involved in DNA replication and repair. During DNA replication, cleaves the 5'-overhanging flap structure that is generated by displacement synthesis when DNA polymerase encounters the 5'-end of a downstream Okazaki fragment. Binds the unpaired 3'-DNA end and kinks the DNA to facilitate 5' cleavage specificity. Cleaves one nucleotide into the double-stranded DNA from the junction in flap DNA, leaving a nick for ligation. Also involved in the base excision repair (BER) pathway. Acts as a genome stabilization factor that prevents flaps from equilibrating into structures that lead to duplications and deletions. Also possesses 5'-3' exonuclease activity on nicked or gapped double-stranded DNA. This Methanothermobacter thermautotrophicus (strain ATCC 29096 / DSM 1053 / JCM 10044 / NBRC 100330 / Delta H) (Methanobacterium thermoautotrophicum) protein is Flap endonuclease 1.